A 249-amino-acid chain; its full sequence is Triosephosphate isomerase (249 aa).

Residues Asn12 and Lys14 each coordinate substrate. Lys14 carries the post-translational modification N6-acetyllysine. A 3'-nitrotyrosine modification is found at Tyr68. Phosphoserine is present on Ser80. His96 acts as the Electrophile in catalysis. Ser106 carries the phosphoserine modification. Lys142 participates in a covalent cross-link: Glycyl lysine isopeptide (Lys-Gly) (interchain with G-Cter in SUMO1). Lys149 is subject to N6-succinyllysine. An N6-acetyllysine; alternate modification is found at Lys156. An N6-succinyllysine; alternate modification is found at Lys156. At Ser159 the chain carries Phosphoserine. Glu166 (proton acceptor) is an active-site residue. At Thr173 the chain carries Phosphothreonine. Lys194 carries the post-translational modification N6-acetyllysine; alternate. At Lys194 the chain carries N6-succinyllysine; alternate. Lys194 bears the N6-methyllysine; alternate mark. Residue Ser198 is modified to Phosphoserine. Tyr209 bears the 3'-nitrotyrosine mark. Ser212 carries the post-translational modification Phosphoserine. Phosphothreonine is present on Thr214. Phosphoserine is present on Ser223. At Lys238 the chain carries N6-acetyllysine.

This sequence belongs to the triosephosphate isomerase family. As to quaternary structure, homodimer.

It is found in the cytoplasm. It catalyses the reaction dihydroxyacetone phosphate = methylglyoxal + phosphate. The enzyme catalyses D-glyceraldehyde 3-phosphate = dihydroxyacetone phosphate. It participates in carbohydrate degradation; glycolysis; D-glyceraldehyde 3-phosphate from glycerone phosphate: step 1/1. The protein operates within carbohydrate biosynthesis; gluconeogenesis. In terms of biological role, triosephosphate isomerase is an extremely efficient metabolic enzyme that catalyzes the interconversion between dihydroxyacetone phosphate (DHAP) and D-glyceraldehyde-3-phosphate (G3P) in glycolysis and gluconeogenesis. It is also responsible for the non-negligible production of methylglyoxal a reactive cytotoxic side-product that modifies and can alter proteins, DNA and lipids. This Macaca fascicularis (Crab-eating macaque) protein is Triosephosphate isomerase (TPI1).